A 218-amino-acid polypeptide reads, in one-letter code: N-(5'-phosphoribosyl)anthranilate isomerase (218 aa).

The protein belongs to the TrpF family.

It carries out the reaction N-(5-phospho-beta-D-ribosyl)anthranilate = 1-(2-carboxyphenylamino)-1-deoxy-D-ribulose 5-phosphate. It participates in amino-acid biosynthesis; L-tryptophan biosynthesis; L-tryptophan from chorismate: step 3/5. In Bacillus licheniformis (strain ATCC 14580 / DSM 13 / JCM 2505 / CCUG 7422 / NBRC 12200 / NCIMB 9375 / NCTC 10341 / NRRL NRS-1264 / Gibson 46), this protein is N-(5'-phosphoribosyl)anthranilate isomerase.